Reading from the N-terminus, the 203-residue chain is Inosine triphosphate pyrophosphatase (203 aa).

ITP is bound at residue 10 to 15 (TGNQNK). A Mg(2+)-binding site is contributed by glutamate 40. ITP contacts are provided by residues lysine 52, 68–69 (DT), lysine 85, 145–148 (FGWD), lysine 168, and 173–174 (HR).

This sequence belongs to the HAM1 NTPase family. As to quaternary structure, homodimer. The cofactor is Mg(2+). Mn(2+) is required as a cofactor.

Its subcellular location is the cytoplasm. It catalyses the reaction ITP + H2O = IMP + diphosphate + H(+). The catalysed reaction is dITP + H2O = dIMP + diphosphate + H(+). The enzyme catalyses XTP + H2O = XMP + diphosphate + H(+). Functionally, pyrophosphatase that hydrolyzes non-canonical purine nucleotides such as inosine triphosphate (ITP), deoxyinosine triphosphate (dITP) or xanthosine 5'-triphosphate (XTP) to their respective monophosphate derivatives. The enzyme does not distinguish between the deoxy- and ribose forms. Probably excludes non-canonical purines from RNA and DNA precursor pools, thus preventing their incorporation into RNA and DNA and avoiding chromosomal lesions. The protein is Inosine triphosphate pyrophosphatase of Nematostella vectensis (Starlet sea anemone).